A 507-amino-acid chain; its full sequence is Nucleoporin p54 (507 aa).

A run of 9 repeats spans residues 5–6 (FG), 25–26 (FG), 28–29 (FG), 53–54 (FG), 61–62 (FG), 63–64 (FG), 67–68 (FG), 87–88 (FG), and 444–445 (FG). Residues 5 to 445 (FGAPSGTSGT…SQIRMQNHFG (441 aa)) are 9 X 2 AA repeats of F-G.

The protein belongs to the NUP54 family. As to quaternary structure, component of the p62 complex, a complex composed of NUP62, NUP54, and the isoform p58 and isoform p45 of NUP58. Interacts with NUTF2. O-glycosylated.

The protein localises to the nucleus. It is found in the nuclear pore complex. It localises to the nucleus membrane. Component of the nuclear pore complex, a complex required for the trafficking across the nuclear membrane. The sequence is that of Nucleoporin p54 (NUP54) from Homo sapiens (Human).